The primary structure comprises 605 residues: Putative zinc finger CCCH domain-containing protein 57 (605 aa).

3 disordered regions span residues 198–218 (RHTG…GREV), 238–261 (LLQD…DGEV), and 375–403 (QASH…YQQP). 2 stretches are compositionally biased toward basic and acidic residues: residues 201-218 (GHES…GREV) and 238-250 (LLQD…RADA). Positions 389-403 (FPFQQQPQHDGYQQP) are enriched in low complexity. 2 consecutive C3H1-type zinc fingers follow at residues 519-547 (EPKT…HSQD) and 557-585 (KYRT…QHRL).

The sequence is that of Putative zinc finger CCCH domain-containing protein 57 from Oryza sativa subsp. japonica (Rice).